A 397-amino-acid polypeptide reads, in one-letter code: MGWKTLDDMDLAGKVVLVRVDVNVPMENGEVTDATRIEKIVPTVEDILKKGGKPVLLAHFGRPKGKVVEEMSLRLVLPALQKALPGTKVSFAADCVGPEPEQAVAAMLEGEVLLLENTRFHAGEEKNDPELAAAMAKLGQVYVNDAFSAAHRAHASTEGLARLLPSAAGRLMEAELKALEAALGHPERPVVAVVGGAKVSTKLDLLGNLVGRVDHLVIGGGMANTFLVAQGIEVGKSLAERDMADTAREILSKAKAAGCTIHLPLDVVVAREFKAGAANETVETSACPADAMILDAGPKTVAALSEVFASAKTLIWNGPLGAFEIEPFDAATNAAALQVAQLTKAGQLISVAGGGDTVAALNKAGAAEGFSYISTAGGAFLEWMEGKELPGVAALTV.

Substrate is bound by residues 21–23 (DVN), arginine 36, 59–62 (HFGR), arginine 119, and arginine 152. Residues lysine 202, glutamate 324, and 354–357 (GGDT) contribute to the ATP site.

This sequence belongs to the phosphoglycerate kinase family. Monomer.

Its subcellular location is the cytoplasm. The enzyme catalyses (2R)-3-phosphoglycerate + ATP = (2R)-3-phospho-glyceroyl phosphate + ADP. Its pathway is carbohydrate degradation; glycolysis; pyruvate from D-glyceraldehyde 3-phosphate: step 2/5. The chain is Phosphoglycerate kinase from Cereibacter sphaeroides (strain KD131 / KCTC 12085) (Rhodobacter sphaeroides).